Consider the following 144-residue polypeptide: Deoxyuridine 5'-triphosphate nucleotidohydrolase (144 aa).

Substrate-binding positions include 63–65 (RSG), Asn-76, and 80–82 (TID).

This sequence belongs to the dUTPase family. Requires Mg(2+) as cofactor.

It carries out the reaction dUTP + H2O = dUMP + diphosphate + H(+). The protein operates within pyrimidine metabolism; dUMP biosynthesis; dUMP from dCTP (dUTP route): step 2/2. In terms of biological role, this enzyme is involved in nucleotide metabolism: it produces dUMP, the immediate precursor of thymidine nucleotides and it decreases the intracellular concentration of dUTP so that uracil cannot be incorporated into DNA. This is Deoxyuridine 5'-triphosphate nucleotidohydrolase from Alkaliphilus metalliredigens (strain QYMF).